A 271-amino-acid chain; its full sequence is Phosphate import ATP-binding protein PstB 1 (271 aa).

Residues 25 to 266 (LTVEHLNLYY…PTQRRTEDYI (242 aa)) enclose the ABC transporter domain. Position 57-64 (57-64 (GPSGCGKS)) interacts with ATP.

Belongs to the ABC transporter superfamily. Phosphate importer (TC 3.A.1.7) family. The complex is composed of two ATP-binding proteins (PstB), two transmembrane proteins (PstC and PstA) and a solute-binding protein (PstS).

It is found in the cell inner membrane. The enzyme catalyses phosphate(out) + ATP + H2O = ADP + 2 phosphate(in) + H(+). In terms of biological role, part of the ABC transporter complex PstSACB involved in phosphate import. Responsible for energy coupling to the transport system. The polypeptide is Phosphate import ATP-binding protein PstB 1 (Pectobacterium atrosepticum (strain SCRI 1043 / ATCC BAA-672) (Erwinia carotovora subsp. atroseptica)).